The sequence spans 984 residues: Pre-mRNA-splicing factor cwf10 (984 aa).

The segment at 1–28 (MMEEDLYDEFGNYIGPENEEDEEELFPQ) is disordered. One can recognise a tr-type G domain in the interval 139–402 (DDVRSFIVAG…HTLTISDEAE (264 aa)). The G1 stretch occupies residues 148-155 (GHLHHGKS). Position 148 to 155 (148 to 155 (GHLHHGKS)) interacts with GTP. The segment at 190–194 (VMSIK) is G2. A G3 region spans residues 216–219 (DTPG). GTP-binding positions include 216–220 (DTPGH) and 270–273 (NKVD). The interval 270–273 (NKVD) is G4. The G5 stretch occupies residues 371 to 373 (QSL).

This sequence belongs to the TRAFAC class translation factor GTPase superfamily. Classic translation factor GTPase family. EF-G/EF-2 subfamily. In terms of assembly, belongs to the 40S cdc5-associated complex (or cwf complex), a spliceosome sub-complex reminiscent of a late-stage spliceosome composed of the U2, U5 and U6 snRNAs and at least brr2, cdc5, cwf2/prp3, cwf3/syf1, cwf4/syf3, cwf5/ecm2, spp42/cwf6, cwf7/spf27, cwf8, cwf9, cwf10, cwf11, cwf12, prp45/cwf13, cwf14, cwf15, cwf16, cwf17, cwf18, cwf19, cwf20, cwf21, cwf22, cwf23, cwf24, cwf25, cwf26, cyp7/cwf27, cwf28, cwf29/ist3, lea1, msl1, prp5/cwf1, prp10, prp12/sap130, prp17, prp22, sap61, sap62, sap114, sap145, slu7, smb1, smd1, smd3, smf1, smg1 and syf2.

The protein localises to the cytoplasm. It is found in the nucleus. Its function is as follows. Component of the U5 snRNP complex required for pre-mRNA splicing. Binds GTP. The chain is Pre-mRNA-splicing factor cwf10 (cwf10) from Schizosaccharomyces pombe (strain 972 / ATCC 24843) (Fission yeast).